Reading from the N-terminus, the 443-residue chain is Zinc finger CCCH domain-containing protein 63 (443 aa).

2 disordered regions span residues Met-1–Thr-29 and Leu-56–Trp-99. 2 consecutive C3H1-type zinc fingers follow at residues Asp-30 to Leu-56 and Thr-109 to Ser-136. WD repeat units follow at residues Gly-149–Lys-190, Gly-228–Glu-265, Gly-272–Thr-311, His-313–Val-349, Lys-354–Arg-396, and Phe-404–Leu-442.

The protein is Zinc finger CCCH domain-containing protein 63 (ZFWD2) of Arabidopsis thaliana (Mouse-ear cress).